Here is a 413-residue protein sequence, read N- to C-terminus: MDHLKRQDEKVFAAIEAELGRQRSKIELIASENFVSEAVMEAQGSVLTNKYAEGYPGKRYYGGCEHVDVVEDIARDRVKEIFGAEHVNVQPHSGAQANMAVYFTILEHGDTVLGMNLSHGGHLTHGSPVNFSGVQYNFVEYGVDAETHRINYDDVLAKAKEHKPKLIVAGASAYPRVIDFKRFREIADEVGAYLMVDMAHIAGLVAAGLHPNPVPHAHFVTTTTHKTLRGPRGGMILCEEKFAKQIDKSIFPGIQGGPLMHVIAAKAVAFGEALQDDFKTYAQNIIHNAQRLAEGLQKEGLTLVSGGTDNHLILIDVRNLNITGKVAEHVLDEVGITVNKNTIPFETASPFVTSGVRIGTAAVTSRGFGLEEMDEIASIIAHTLKNHEDETALEEARKRVAVLTSKFPMYTDL.

Residues Leu-117 and 121–123 each bind (6S)-5,6,7,8-tetrahydrofolate; that span reads GHL. Residue Lys-226 is modified to N6-(pyridoxal phosphate)lysine. Residues Glu-239 and 349-351 each bind (6S)-5,6,7,8-tetrahydrofolate; that span reads SPF.

Belongs to the SHMT family. Homodimer. Pyridoxal 5'-phosphate is required as a cofactor.

Its subcellular location is the cytoplasm. The catalysed reaction is (6R)-5,10-methylene-5,6,7,8-tetrahydrofolate + glycine + H2O = (6S)-5,6,7,8-tetrahydrofolate + L-serine. Its pathway is one-carbon metabolism; tetrahydrofolate interconversion. It functions in the pathway amino-acid biosynthesis; glycine biosynthesis; glycine from L-serine: step 1/1. In terms of biological role, catalyzes the reversible interconversion of serine and glycine with tetrahydrofolate (THF) serving as the one-carbon carrier. This reaction serves as the major source of one-carbon groups required for the biosynthesis of purines, thymidylate, methionine, and other important biomolecules. Also exhibits THF-independent aldolase activity toward beta-hydroxyamino acids, producing glycine and aldehydes, via a retro-aldol mechanism. This is Serine hydroxymethyltransferase from Bacillus cytotoxicus (strain DSM 22905 / CIP 110041 / 391-98 / NVH 391-98).